A 62-amino-acid polypeptide reads, in one-letter code: UPF0434 protein ABO_2103 (62 aa).

This sequence belongs to the UPF0434 family.

The protein is UPF0434 protein ABO_2103 of Alcanivorax borkumensis (strain ATCC 700651 / DSM 11573 / NCIMB 13689 / SK2).